Here is a 799-residue protein sequence, read N- to C-terminus: Phospholipase A-2-activating protein (799 aa).

7 WD repeats span residues Gly-21–Ile-62, Gly-69–Thr-113, Gly-116–Gln-154, Gly-155–Leu-194, His-196–Tyr-233, Gly-235–Arg-274, and Pro-276–Glu-314. The PFU domain maps to Gln-372–Gly-471. A PUL domain is found at Ala-537–Met-798. ARM repeat units lie at residues Ala-550–Gly-592, Gly-593–Ser-624, Ile-625–Cys-673, Asp-674–Lys-719, Val-720–Gly-759, and Asp-760–Leu-799.

Belongs to the WD repeat PLAP family.

It is found in the nucleus. The protein localises to the cytoplasm. The protein resides in the synapse. Its function is as follows. Plays a role in protein ubiquitination, sorting and degradation through its association with VCP. Involved in ubiquitin-mediated membrane proteins trafficking to late endosomes in an ESCRT-dependent manner, and hence plays a role in synaptic vesicle recycling. May play a role in macroautophagy, regulating for instance the clearance of damaged lysosomes. Plays a role in cerebellar Purkinje cell development. Positively regulates cytosolic and calcium-independent phospholipase A2 activities in a tumor necrosis factor alpha (TNF-alpha)- or lipopolysaccharide (LPS)-dependent manner, and hence prostaglandin E2 biosynthesis. The protein is Phospholipase A-2-activating protein (plaa) of Xenopus laevis (African clawed frog).